A 126-amino-acid polypeptide reads, in one-letter code: Protein ApaG (126 aa).

One can recognise an ApaG domain in the interval 2-126; it reads DVSLPCIKIQ…FRLAVPHVLN (125 aa).

The polypeptide is Protein ApaG (Vibrio cholerae serotype O1 (strain ATCC 39541 / Classical Ogawa 395 / O395)).